Here is a 507-residue protein sequence, read N- to C-terminus: Putative histone deacetylase 2 (507 aa).

The tract at residues 29–342 (RNVAYYYHKD…WALETGVILG (314 aa)) is histone deacetylase. H162 is a catalytic residue. A disordered region spans residues 444–507 (EECFVEEDSK…RKDLNIPGIP (64 aa)). Positions 482-501 (SHSDVIEEAKYEDRDRRKDL) are enriched in basic and acidic residues.

The protein belongs to the histone deacetylase family. HD type 1 subfamily. As to quaternary structure, may be a component of a histone deacetylase complex containing saeg-2, saeg-1 and hda-2.

The protein resides in the nucleus. It carries out the reaction N(6)-acetyl-L-lysyl-[histone] + H2O = L-lysyl-[histone] + acetate. Probably responsible for the deacetylation of lysine residues on the N-terminal part of the core histones (H2A, H2B, H3 and H4). Histone deacetylation gives a tag for epigenetic repression and plays an important role in transcriptional regulation, cell cycle progression and developmental events. Histone deacetylases act via the formation of large multiprotein complexes. As a likely component of a histone deacetylase complex, together with saeg-1 and hda-2, functions downstream of the cAMP-dependent kinase egl-4 to regulate the expression of genes required for egg-laying and forgaging. The sequence is that of Putative histone deacetylase 2 (hda-2) from Caenorhabditis elegans.